Consider the following 229-residue polypeptide: Geodin cluster transcription factor (229 aa).

Residues 12–39 (CHACAASKVRCSKEKPTCSRCSKRGTTC) constitute a DNA-binding region (zn(2)-C6 fungal-type). Disordered regions lie at residues 50–100 (KQLN…PGTT) and 141–169 (TANSEPLDAEGGITSSHNTSSNSPARPPT). Composition is skewed to polar residues over residues 51–71 (QLNNRSTAKESSNTTRTSLAT) and 153–164 (ITSSHNTSSNSP).

The protein resides in the nucleus. Functionally, transcription factor that regulates the expression of the gene cluster that mediates the biosynthesis of geodin, an intermediate in the biosynthesis of other natural products. The sequence is that of Geodin cluster transcription factor from Aspergillus terreus (strain NIH 2624 / FGSC A1156).